The sequence spans 728 residues: Catalase-peroxidase (728 aa).

An N-terminal signal peptide occupies residues 1–19 (MSTEAKCPVTGGATRSSSA). Residues 1–20 (MSTEAKCPVTGGATRSSSAG) are disordered. A cross-link (tryptophyl-tyrosyl-methioninium (Trp-Tyr) (with M-245)) is located at residues 96–219 (WHAAGTYRIG…LAAVQMGLIY (124 aa)). His97 (proton acceptor) is an active-site residue. The segment at residues 219-245 (YVNPEGPNGKPDPVAAARDIRETFARM) is a cross-link (tryptophyl-tyrosyl-methioninium (Tyr-Met) (with W-96)). Residue His260 participates in heme b binding.

Belongs to the peroxidase family. Peroxidase/catalase subfamily. As to quaternary structure, homodimer or homotetramer. Requires heme b as cofactor. In terms of processing, formation of the three residue Trp-Tyr-Met cross-link is important for the catalase, but not the peroxidase activity of the enzyme.

It carries out the reaction H2O2 + AH2 = A + 2 H2O. The enzyme catalyses 2 H2O2 = O2 + 2 H2O. Its function is as follows. Bifunctional enzyme with both catalase and broad-spectrum peroxidase activity. In Acidiphilium cryptum (strain JF-5), this protein is Catalase-peroxidase.